The chain runs to 549 residues: Serine/threonine-protein phosphatase PPQ (549 aa).

A compositionally biased stretch (polar residues) spans 1 to 13 (MRRSPSRSNNNFA). 4 disordered regions span residues 1 to 50 (MRRS…RSLP), 64 to 85 (YNTL…DNLL), 133 to 158 (TSST…NYSS), and 189 to 219 (SRVK…PKSS). 2 stretches are compositionally biased toward low complexity: residues 16–32 (NCST…TTPS) and 68–83 (ASAG…SNDN). Residues 205-217 (APSSPTSGIPNPK) are compositionally biased toward polar residues. Asp301, His303, Asp329, and Asn361 together coordinate Mn(2+). Catalysis depends on His362, which acts as the Proton donor. 2 residues coordinate Mn(2+): His410 and His485.

The protein belongs to the PPP phosphatase family. PP-Z subfamily. The cofactor is Mn(2+).

The enzyme catalyses O-phospho-L-seryl-[protein] + H2O = L-seryl-[protein] + phosphate. The catalysed reaction is O-phospho-L-threonyl-[protein] + H2O = L-threonyl-[protein] + phosphate. Phosphatase involved in the regulation of protein synthesis. Affects translational accuracy. In Saccharomyces cerevisiae (strain ATCC 204508 / S288c) (Baker's yeast), this protein is Serine/threonine-protein phosphatase PPQ (PPQ1).